The following is a 406-amino-acid chain: Formate-dependent phosphoribosylglycinamide formyltransferase (406 aa).

Residues 27–28 and E87 each bind N(1)-(5-phospho-beta-D-ribosyl)glycinamide; that span reads EL. ATP-binding positions include R120, K162, 167 to 172, 202 to 205, and E210; these read SSGKGQ and EGFI. One can recognise an ATP-grasp domain in the interval 125–320; it reads RLAAETLGLP…EFELHARALL (196 aa). Residues E279 and E291 each coordinate Mg(2+). N(1)-(5-phospho-beta-D-ribosyl)glycinamide is bound by residues D298, K367, and 374–375; that span reads RR.

The protein belongs to the PurK/PurT family. As to quaternary structure, homodimer.

The enzyme catalyses N(1)-(5-phospho-beta-D-ribosyl)glycinamide + formate + ATP = N(2)-formyl-N(1)-(5-phospho-beta-D-ribosyl)glycinamide + ADP + phosphate + H(+). Its pathway is purine metabolism; IMP biosynthesis via de novo pathway; N(2)-formyl-N(1)-(5-phospho-D-ribosyl)glycinamide from N(1)-(5-phospho-D-ribosyl)glycinamide (formate route): step 1/1. In terms of biological role, involved in the de novo purine biosynthesis. Catalyzes the transfer of formate to 5-phospho-ribosyl-glycinamide (GAR), producing 5-phospho-ribosyl-N-formylglycinamide (FGAR). Formate is provided by PurU via hydrolysis of 10-formyl-tetrahydrofolate. This Bordetella bronchiseptica (strain ATCC BAA-588 / NCTC 13252 / RB50) (Alcaligenes bronchisepticus) protein is Formate-dependent phosphoribosylglycinamide formyltransferase.